The sequence spans 81 residues: Large ribosomal subunit protein uL23 (81 aa).

The protein belongs to the universal ribosomal protein uL23 family. In terms of assembly, part of the 50S ribosomal subunit. Contacts protein L29.

Its function is as follows. Binds to 23S rRNA. One of the proteins that surrounds the polypeptide exit tunnel on the outside of the ribosome. The polypeptide is Large ribosomal subunit protein uL23 (Saccharolobus solfataricus (strain ATCC 35092 / DSM 1617 / JCM 11322 / P2) (Sulfolobus solfataricus)).